A 504-amino-acid polypeptide reads, in one-letter code: Cobyric acid synthase (504 aa).

In terms of domain architecture, GATase cobBQ-type spans 254-442 (AIDVAVIRYP…MHDLFHNDMF (189 aa)). C336 serves as the catalytic Nucleophile. H434 is an active-site residue.

This sequence belongs to the CobB/CobQ family. CobQ subfamily.

Its pathway is cofactor biosynthesis; adenosylcobalamin biosynthesis. Functionally, catalyzes amidations at positions B, D, E, and G on adenosylcobyrinic A,C-diamide. NH(2) groups are provided by glutamine, and one molecule of ATP is hydrogenolyzed for each amidation. The sequence is that of Cobyric acid synthase from Anoxybacillus flavithermus (strain DSM 21510 / WK1).